The sequence spans 158 residues: NAD(P)H-quinone oxidoreductase subunit N (158 aa).

This sequence belongs to the complex I NdhN subunit family. In terms of assembly, NDH-1 can be composed of about 15 different subunits; different subcomplexes with different compositions have been identified which probably have different functions.

It is found in the cellular thylakoid membrane. The catalysed reaction is a plastoquinone + NADH + (n+1) H(+)(in) = a plastoquinol + NAD(+) + n H(+)(out). It carries out the reaction a plastoquinone + NADPH + (n+1) H(+)(in) = a plastoquinol + NADP(+) + n H(+)(out). In terms of biological role, NDH-1 shuttles electrons from an unknown electron donor, via FMN and iron-sulfur (Fe-S) centers, to quinones in the respiratory and/or the photosynthetic chain. The immediate electron acceptor for the enzyme in this species is believed to be plastoquinone. Couples the redox reaction to proton translocation, and thus conserves the redox energy in a proton gradient. Cyanobacterial NDH-1 also plays a role in inorganic carbon-concentration. The polypeptide is NAD(P)H-quinone oxidoreductase subunit N (Trichodesmium erythraeum (strain IMS101)).